A 386-amino-acid polypeptide reads, in one-letter code: Succinate--CoA ligase [ADP-forming] subunit beta (386 aa).

An ATP-grasp domain is found at 9-244 (KQVLRSSNLN…DSQIDAKEAA (236 aa)). Residues Lys46, 53-55 (GRG), Glu99, Leu102, and Glu107 contribute to the ATP site. The Mg(2+) site is built by Asn199 and Asp213. Substrate-binding positions include Asn264 and 321 to 323 (GIV).

The protein belongs to the succinate/malate CoA ligase beta subunit family. As to quaternary structure, heterotetramer of two alpha and two beta subunits. It depends on Mg(2+) as a cofactor.

The enzyme catalyses succinate + ATP + CoA = succinyl-CoA + ADP + phosphate. It carries out the reaction GTP + succinate + CoA = succinyl-CoA + GDP + phosphate. It participates in carbohydrate metabolism; tricarboxylic acid cycle; succinate from succinyl-CoA (ligase route): step 1/1. Functionally, succinyl-CoA synthetase functions in the citric acid cycle (TCA), coupling the hydrolysis of succinyl-CoA to the synthesis of either ATP or GTP and thus represents the only step of substrate-level phosphorylation in the TCA. The beta subunit provides nucleotide specificity of the enzyme and binds the substrate succinate, while the binding sites for coenzyme A and phosphate are found in the alpha subunit. The chain is Succinate--CoA ligase [ADP-forming] subunit beta from Thiobacillus denitrificans (strain ATCC 25259 / T1).